A 484-amino-acid polypeptide reads, in one-letter code: Sorting assembly machinery 50 kDa subunit (484 aa).

Belongs to the SAM50/omp85 family. As to quaternary structure, component of the mitochondrial outer membrane sorting assembly machinery (SAM or TOB) complex, which at least consists of SAM35, SAM37 and SAM50. Associates with the mitochondrial contact site and cristae organizing system (MICOS) complex (also known as MINOS or MitOS complex).

Its subcellular location is the mitochondrion outer membrane. Component of the mitochondrial outer membrane sorting assembly machinery (SAM or TOB) complex, which is required for the sorting of proteins with complicated topology, such as beta-barrel proteins, to the mitochondrial outer membrane after import by the TOM complex. In Saccharomyces cerevisiae (strain ATCC 204508 / S288c) (Baker's yeast), this protein is Sorting assembly machinery 50 kDa subunit (SAM50).